The primary structure comprises 605 residues: DNA primase (605 aa).

A CHC2-type zinc finger spans residues 38 to 62 (CPFHDEKTPSFTVSEDKQICHCFGC). The Toprim domain occupies 260-341 (DEIVLLEGFM…NVFVIQLPSG (82 aa)). Residues glutamate 266, aspartate 310, and aspartate 312 each contribute to the Mg(2+) site.

It belongs to the DnaG primase family. In terms of assembly, monomer. Interacts with DnaB. Requires Zn(2+) as cofactor. Mg(2+) serves as cofactor.

It carries out the reaction ssDNA + n NTP = ssDNA/pppN(pN)n-1 hybrid + (n-1) diphosphate.. Functionally, RNA polymerase that catalyzes the synthesis of short RNA molecules used as primers for DNA polymerase during DNA replication. The polypeptide is DNA primase (Staphylococcus aureus (strain MW2)).